A 628-amino-acid chain; its full sequence is E3 SUMO-protein ligase PIAS3 (628 aa).

The tract at residues 1–200 (MAELGELKHM…QLRFCLCETS (200 aa)) is interaction with CCAR2. The SAP domain maps to 11 to 45 (VMSFRVSELQVLLGFAGRNKSGRKHELLAKALHLL). An LXXLL motif motif is present at residues 19 to 23 (LQVLL). Residues Lys-46, Lys-56, Lys-230, and Lys-307 each participate in a glycyl lysine isopeptide (Lys-Gly) (interchain with G-Cter in SUMO2) cross-link. The 166-residue stretch at 115-280 (MHPPLPQPVH…SLSVYLVRQL (166 aa)) folds into the PINIT domain. Residues 312–393 (PDSEVATTSL…FMEILSSCSD (82 aa)) form an SP-RING-type zinc finger. Residues Cys-343, His-345, Cys-366, and Cys-369 each coordinate Zn(2+). Residues 450 to 460 (LTIESSSDEED) form an SUMO1-binding region. Glycyl lysine isopeptide (Lys-Gly) (interchain with G-Cter in SUMO2) cross-links involve residues Lys-466 and Lys-482. The segment at 597–617 (VAPGGALREGHGGPLPSGPSL) is disordered.

Belongs to the PIAS family. As to quaternary structure, monomer. Binds SUMO1 and UBE2I. Interacts with BCL11A, HMGA2, IRF1, MITF and NCOA2. Interacts with STAT5; the interaction occurs on stimulation by PRL. Interacts with GFI1; the interaction relieves the inhibitory effect of PIAS3 on STAT3-mediated transcriptional activity. Interacts with AR, PLAG1 and ZFHX3. Interacts with STAT3; the interaction occurs on stimulation by IL6, CNTF or OSM and inhibits the DNA binding activity of STAT3. Interacts with MTA1. Interacts with CCAR2 (via N-terminus). Interacts with TRIM8. Interacts with PRDM1/Blimp-1. Sumoylated. Widely expressed.

The protein localises to the cytoplasm. It localises to the nucleus. It is found in the nucleus speckle. The protein operates within protein modification; protein sumoylation. Its function is as follows. Functions as an E3-type small ubiquitin-like modifier (SUMO) ligase, stabilizing the interaction between UBE2I and the substrate, and as a SUMO-tethering factor. Plays a crucial role as a transcriptional coregulation in various cellular pathways, including the STAT pathway and the steroid hormone signaling pathway. Involved in regulating STAT3 signaling via inhibiting STAT3 DNA-binding and suppressing cell growth. Enhances the sumoylation of MTA1 and may participate in its paralog-selective sumoylation. Sumoylates CCAR2 which promotes its interaction with SIRT1. Diminishes the sumoylation of ZFHX3 by preventing the colocalization of ZFHX3 with SUMO1 in the nucleus. This chain is E3 SUMO-protein ligase PIAS3 (PIAS3), found in Homo sapiens (Human).